The following is a 550-amino-acid chain: Hydroxylamine reductase (550 aa).

Residues C3, C6, C18, and C25 each coordinate [2Fe-2S] cluster. Hybrid [4Fe-2O-2S] cluster contacts are provided by H249, E273, C317, C405, C433, C458, E492, and K494. C405 carries the post-translational modification Cysteine persulfide.

It belongs to the HCP family. Requires [2Fe-2S] cluster as cofactor. It depends on hybrid [4Fe-2O-2S] cluster as a cofactor.

The protein localises to the cytoplasm. It catalyses the reaction A + NH4(+) + H2O = hydroxylamine + AH2 + H(+). Functionally, catalyzes the reduction of hydroxylamine to form NH(3) and H(2)O. This chain is Hydroxylamine reductase, found in Salmonella dublin (strain CT_02021853).